We begin with the raw amino-acid sequence, 77 residues long: Sec-independent protein translocase protein TatA (77 aa).

Residues 1–21 form a helical membrane-spanning segment; sequence MGSFSIWHWLVVGILVLLLFG. The tract at residues 41–77 is disordered; that stretch reads KGMSEDDAPTPAPKQIDAQRAPDLSATPTPTAETENR. Positions 66-77 are enriched in polar residues; that stretch reads ATPTPTAETENR.

Belongs to the TatA/E family. As to quaternary structure, the Tat system comprises two distinct complexes: a TatABC complex, containing multiple copies of TatA, TatB and TatC subunits, and a separate TatA complex, containing only TatA subunits. Substrates initially bind to the TatABC complex, which probably triggers association of the separate TatA complex to form the active translocon.

It localises to the cell inner membrane. Part of the twin-arginine translocation (Tat) system that transports large folded proteins containing a characteristic twin-arginine motif in their signal peptide across membranes. TatA could form the protein-conducting channel of the Tat system. This chain is Sec-independent protein translocase protein TatA, found in Sphingopyxis alaskensis (strain DSM 13593 / LMG 18877 / RB2256) (Sphingomonas alaskensis).